The following is a 365-amino-acid chain: MCGIRAKKSGLGGYGAGLLAALLGVSFLSQHAQTAEHVTNAANNTTIQIMKSTLSLSEVCGKTKFQGKIYGGQIAGAERWPWQASLRLYGRHICGAVLIDKNWVLSAAHCFQRSQEPSDYHVMLGYTDLNSPTRYSRTMSVQKVIVHKDYNRFHTQGSDIVLLQLRSSVEYSSHILPACVPEENIKIPKEKACWASGWGYLREDVRIPLPNELYEAELIIMSNDQCKGFFPPPVPGSGRSYYIYDDMVCAADYDMSKSICAGDSGGPLVCLLEGSWYVVGLTSWSSTCEEPIVSPSVFARVSYFDKWIKDNKKSSSNSKPGESPHHPGSPENENPEGDNKNQGAVIKPTVCTALLLSQILLQQLI.

The first 34 residues, 1 to 34 (MCGIRAKKSGLGGYGAGLLAALLGVSFLSQHAQT), serve as a signal peptide directing secretion. N-linked (GlcNAc...) asparagine glycosylation occurs at Asn-44. Positions 69 to 313 (IYGGQIAGAE…FDKWIKDNKK (245 aa)) constitute a Peptidase S1 domain. Cys-94 and Cys-110 are joined by a disulfide. Residues His-109 and Asp-159 each act as charge relay system in the active site. Intrachain disulfides connect Cys-193–Cys-270, Cys-226–Cys-249, and Cys-260–Cys-288. Ser-264 (charge relay system) is an active-site residue. The tract at residues 312-343 (KKSSSNSKPGESPHHPGSPENENPEGDNKNQG) is disordered.

This sequence belongs to the peptidase S1 family. As to expression, expressed in testis. More specifically, abundantly expressed in the haploid round spermatid.

It is found in the cytoplasmic vesicle. Its subcellular location is the secretory vesicle. The protein localises to the acrosome. It localises to the secreted. May play an important role in the sperm/egg interaction; released during the acrosome reaction. This Mus musculus (Mouse) protein is Serine protease 40 (Prss40).